The primary structure comprises 354 residues: uncharacterized protein (354 aa).

The 238-residue stretch at 48–285 (VETWEISKIY…DEGYEVVLKG (238 aa)) folds into the ABC transporter domain. 87–94 (GPNGAGKT) is a binding site for ATP.

Belongs to the ABC transporter superfamily.

This is an uncharacterized protein from Synechocystis sp. (strain ATCC 27184 / PCC 6803 / Kazusa).